We begin with the raw amino-acid sequence, 72 residues long: Disintegrin basilicin (72 aa).

The Disintegrin domain maps to 1-72; the sequence is AGEECDCGSP…ADCPRNHFHA (72 aa). Disulfide bonds link Cys-5-Cys-20, Cys-7-Cys-15, Cys-14-Cys-37, Cys-28-Cys-34, Cys-33-Cys-58, and Cys-46-Cys-65. The Cell attachment site signature appears at 50 to 52; the sequence is RGD.

This sequence belongs to the venom metalloproteinase (M12B) family. P-II subfamily. P-IIa sub-subfamily. In terms of assembly, monomer (disintegrin). Expressed by the venom gland.

It is found in the secreted. In terms of biological role, inhibits fibrinogen interaction with platelets. Acts by binding to alpha-IIb/beta-3 (ITGA2B/ITGB3) on the platelet surface and inhibits aggregation induced by ADP, thrombin, platelet-activating factor and collagen. The sequence is that of Disintegrin basilicin from Crotalus basiliscus (Mexican west-coast rattlesnake).